We begin with the raw amino-acid sequence, 418 residues long: AP-3 complex subunit mu-1 (418 aa).

The 242-residue stretch at 176-417 (NNEAYFDVVE…VTKAGKFQVR (242 aa)) folds into the MHD domain.

The protein belongs to the adaptor complexes medium subunit family. In terms of assembly, adaptor protein complex 3 (AP-3) is a heterotetramer composed of two large adaptins (delta-type subunit AP3D1 and beta-type subunit AP3B1 or AP3B2), a medium adaptin (mu-type subunit AP3M1 or AP3M2) and a small adaptin (sigma-type subunit APS1 or AP3S2). Interacts with AGAP1. AP-3 associates with the BLOC-1 complex.

It is found in the golgi apparatus. Its subcellular location is the cytoplasmic vesicle membrane. In terms of biological role, part of the AP-3 complex, an adaptor-related complex which is not clathrin-associated. The complex is associated with the Golgi region as well as more peripheral structures. It facilitates the budding of vesicles from the Golgi membrane and may be directly involved in trafficking to lysosomes. In concert with the BLOC-1 complex, AP-3 is required to target cargos into vesicles assembled at cell bodies for delivery into neurites and nerve terminals. This is AP-3 complex subunit mu-1 (Ap3m1) from Mus musculus (Mouse).